The following is a 1350-amino-acid chain: Nicotinate hydroxylase hnxS (1350 aa).

[2Fe-2S] cluster is bound by residues Cys-49, Cys-54, Cys-89, Cys-92, Cys-133, and Cys-135. The tract at residues 164-193 (LVGTEEETESDMGAHSGSGDTGSRSSGSCG) is disordered. Low complexity predominate over residues 180-192 (GSGDTGSRSSGSC). Residues 256–445 (YGDAEQAWVK…TKIAVPMPSK (190 aa)) enclose the FAD-binding PCMH-type domain. Residues 284 to 291 (LVTGASEV), 379 to 383 (CLAGN), Asp-392, and Lys-455 each bind FAD. Residues Gln-793 and Phe-824 each coordinate Mo-molybdopterin. Substrate-binding residues include Glu-828 and Arg-906. Arg-938 and Ala-1107 together coordinate Mo-molybdopterin. Catalysis depends on Glu-1281, which acts as the Proton acceptor.

This sequence belongs to the xanthine dehydrogenase family. [2Fe-2S] cluster serves as cofactor. Requires FAD as cofactor. The cofactor is Mo-molybdopterin.

With respect to regulation, allopurinol inhibits catalytic activity in a linear fashion. Functionally, nicotinate hydroxylase, part of the hnx cluster involved in the purine degradation. The nicotinate hydroxylase hnxS accepts nicotinate as a substrate and catalyzes the first step of nicotinate catabolism. HnxS also accepts hypoxanthine, but not xanthine, as a substrate. The major facilitator-type transporters hxnP and hxnZ are probably involved in the uptake of nicotinate-derived metabolites, and the oxidoreductases hxnT and hxnY in the further metabolism of 6-OH nicotinic acid. This chain is Nicotinate hydroxylase hnxS, found in Emericella nidulans (strain FGSC A4 / ATCC 38163 / CBS 112.46 / NRRL 194 / M139) (Aspergillus nidulans).